The chain runs to 145 residues: Large ribosomal subunit protein uL11 (145 aa).

It belongs to the universal ribosomal protein uL11 family. In terms of assembly, part of the ribosomal stalk of the 50S ribosomal subunit. Interacts with L10 and the large rRNA to form the base of the stalk. L10 forms an elongated spine to which L12 dimers bind in a sequential fashion forming a multimeric L10(L12)X complex. Post-translationally, one or more lysine residues are methylated.

In terms of biological role, forms part of the ribosomal stalk which helps the ribosome interact with GTP-bound translation factors. The chain is Large ribosomal subunit protein uL11 from Rickettsia canadensis (strain McKiel).